The chain runs to 86 residues: EMBRYO SURROUNDING FACTOR 1-like protein 2 (86 aa).

The N-terminal stretch at 1-21 is a signal peptide; sequence MKSHIAIICIIMLSFFSMHEY. Intrachain disulfides connect cysteine 39–cysteine 54, cysteine 44–cysteine 82, cysteine 52–cysteine 78, and cysteine 55–cysteine 65.

It belongs to the MEG family.

This Arabidopsis thaliana (Mouse-ear cress) protein is EMBRYO SURROUNDING FACTOR 1-like protein 2 (ESFL2).